Here is a 147-residue protein sequence, read N- to C-terminus: Small ribosomal subunit protein uS12 (147 aa).

This sequence belongs to the universal ribosomal protein uS12 family. Part of the 30S ribosomal subunit.

In terms of biological role, with S4 and S5 plays an important role in translational accuracy. Located at the interface of the 30S and 50S subunits. In Thermococcus kodakarensis (strain ATCC BAA-918 / JCM 12380 / KOD1) (Pyrococcus kodakaraensis (strain KOD1)), this protein is Small ribosomal subunit protein uS12.